A 526-amino-acid chain; its full sequence is Outer capsid protein VP5 (526 aa).

The interval 1-42 (MGKVIRSLSRFGKKVGNALTSNTAKKIYSTIGKAAERFAESE) is involved in membrane permeabilization.

It belongs to the orbivirus VP5 family.

The protein resides in the virion. Its function is as follows. VP5 protein is one of the two proteins (with VP2) which constitute the virus particle outer capsid. Acts as a membrane permeabilization protein that mediates release of viral particles from endosomal compartments into the cytoplasm. Permeabilization activity is probably negatively regulated by VP2 and is triggered by endosomal degradation of VP2 and exposure to low pH. The sequence is that of Outer capsid protein VP5 (Segment-6) from Bluetongue virus 1 (isolate Australia) (BTV 1).